A 268-amino-acid polypeptide reads, in one-letter code: tRNA pseudouridine synthase A (268 aa).

The active-site Nucleophile is the aspartate 52. Tyrosine 113 is a substrate binding site.

This sequence belongs to the tRNA pseudouridine synthase TruA family. Homodimer.

It catalyses the reaction uridine(38/39/40) in tRNA = pseudouridine(38/39/40) in tRNA. Formation of pseudouridine at positions 38, 39 and 40 in the anticodon stem and loop of transfer RNAs. The polypeptide is tRNA pseudouridine synthase A (Chlamydia felis (strain Fe/C-56) (Chlamydophila felis)).